Reading from the N-terminus, the 893-residue chain is MFPLKDAEMGAFTFFASALPHDVCGSNGLPLTPNSIKILGRFQILKTITHPRLCQYVDISRGKHERLVVVAEHCERSLEDLLRERKPVSCSTVLCIAFEVLQGLQYMNKHGIVHRALSPHNILLDRKGHIKLAKFGLYHMTAHGDDVDFPIGYPSYLAPEVIAQGIFKTTDHMPSKKPLPSGPKSDVWSLGIILFELCVGRKLFQSLDISERLKFLLTLDCVDDTLIVLAEEHGCLDIIKELPETVIDLLNKCLTFHPSKRPTPDQLMKDKVFSEVSPLYTPFTKPASLFSSSLRCADLTLPEDISQLCKDINNDYLAERSIEEVYYLWCLAGGDLEKELVNKEIIRSKPPICTLPNFLFEDGESFGQGRDRSSLLDDTTVTLSLCQLRNRLKDVGGEAFYPLLEDDQSNLPHSNSNNELSAAATLPLIIREKDTEYQLNRIILFDRLLKAYPYKKNQIWKEARVDIPPLMRGLTWAALLGVEGAIHAKYDAIDKDTPIPTDRQIEVDIPRCHQYDELLSSPEGHAKFRRVLKAWVVSHPDLVYWQGLDSLCAPFLYLNFNNEALAYACMSAFIPKYLYNFFLKDNSHVIQEYLTVFSQMIAFHDPELSNHLNEIGFIPDLYAIPWFLTMFTHVFPLHKIFHLWDTLLLGNSSFPFCIGVAILQQLRDRLLANGFNECILLFSDLPEIDIERCVRESINLFCWTPKSATYRQHAQPPKPSSDSSGGRSSAPYFSAECPDPPKTDLSRESIPLNDLKSEVSPRISAEDLIDLCELTVTGHFKTPSKKTKSSKPKLLVVDIRNSEDFIRGHISGSINIPFSAAFTAEGELTQGPYTAMLQNFKGKVIVIVGHVAKHTAEFAAHLVKMKYPRICILDGGINKIKPTGLLTIPSPQI.

Positions 1-273 (MFPLKDAEMG…PDQLMKDKVF (273 aa)) constitute a Protein kinase domain. The 186-residue stretch at 466–651 (DIPPLMRGLT…HLWDTLLLGN (186 aa)) folds into the Rab-GAP TBC domain. The disordered stretch occupies residues 710-749 (YRQHAQPPKPSSDSSGGRSSAPYFSAECPDPPKTDLSRES). Residues 720 to 729 (SSDSSGGRSS) are compositionally biased toward low complexity. Residues 790–889 (SKPKLLVVDI…IKPTGLLTIP (100 aa)) enclose the Rhodanese domain.

Belongs to the protein kinase superfamily. Component of the FERRY complex composed of five subunits, TBCK, PPP1R21, FERRY3, CRYZL1 and GATD1 with a ratio of 1:2:1:2:4, respectively.

It localises to the cytoplasm. The protein resides in the cytoskeleton. Its subcellular location is the spindle. The protein localises to the midbody. It is found in the early endosome. Its function is as follows. Component of the FERRY complex (Five-subunit Endosomal Rab5 and RNA/ribosome intermediary). The FERRY complex directly interacts with mRNAs and RAB5A, and functions as a RAB5A effector involved in the localization and the distribution of specific mRNAs most likely by mediating their endosomal transport. The complex recruits mRNAs and ribosomes to early endosomes through direct mRNA-interaction. Also involved in the modulation of mTOR signaling and expression of mTOR complex components. Involved in the control of actin-cytoskeleton organization. The polypeptide is TBC domain-containing protein kinase-like protein (Homo sapiens (Human)).